Consider the following 116-residue polypeptide: UPF0329 protein ECU05_1650 (116 aa).

Belongs to the UPF0329 family.

The polypeptide is UPF0329 protein ECU05_1650 (Encephalitozoon cuniculi (strain GB-M1) (Microsporidian parasite)).